Consider the following 278-residue polypeptide: Protein lyl-1 (278 aa).

Positions 1–46 are disordered; sequence MCPPQARAEVGSAMTEKTEMVCASSPAPAPPSKPASPGPLSTEEVD. Residues 27 to 37 are compositionally biased toward pro residues; sequence APAPPSKPASP. The 53-residue stretch at 149–201 folds into the bHLH domain; the sequence is ARRVFTNSRERWRQQHVNGAFAELRKLLPTHPPDRKLSKNEVLRLAMKYIGFL. The interval 212–278 is disordered; sequence LTSGPSAPGS…EQTSLSPEVR (67 aa). Residues 269-278 are compositionally biased toward polar residues; sequence EQTSLSPEVR. S274 is subject to Phosphoserine.

As to quaternary structure, efficient DNA binding requires dimerization with another bHLH protein.

The protein localises to the nucleus. This is Protein lyl-1 (Lyl1) from Mus musculus (Mouse).